The sequence spans 173 residues: FMN reductase (NADH) RutF 2 (173 aa).

It belongs to the non-flavoprotein flavin reductase family. RutF subfamily.

It catalyses the reaction FMNH2 + NAD(+) = FMN + NADH + 2 H(+). Catalyzes the reduction of FMN to FMNH2 which is used to reduce pyrimidine by RutA via the Rut pathway. The chain is FMN reductase (NADH) RutF 2 from Rhizobium rhizogenes (strain K84 / ATCC BAA-868) (Agrobacterium radiobacter).